Here is a 231-residue protein sequence, read N- to C-terminus: Triggering receptor expressed on myeloid cells 1 (231 aa).

The N-terminal stretch at 1 to 20 is a signal peptide; sequence MRKTRLWGLLWMFFVSELLA. Residues 21–202 lie on the Extracellular side of the membrane; that stretch reads ATKLTEEKYE…TDIIRVPVFN (182 aa). Residues 26–131 form the Ig-like V-type domain; the sequence is EEKYELKEGQ…LFDRIRLVVT (106 aa). Cys-41 and Cys-110 form a disulfide bridge. Composition is skewed to polar residues over residues 134–157 and 164–182; these read SSGT…TTTK and TSPT…DVST. The interval 134 to 182 is disordered; it reads SSGTPGSSENSTPNVYKTPPTTTKALRPLYTSPTTVTQAPPKSTADVST. Residues Asn-188 and Asn-191 are each glycosylated (N-linked (GlcNAc...) asparagine). A helical transmembrane segment spans residues 203 to 223; it reads IAILVAGGFLSKSLVFSVLFA. At 224-231 the chain is on the cytoplasmic side; that stretch reads VTLRSFVP.

Monomer. Homomultimer; when activated. Interacts with TYROBP/DAP12. Interacts with TLR4.

It localises to the cell membrane. Cell surface receptor that plays important roles in innate and adaptive immunity by amplifying inflammatory responses. Upon activation by various ligands such as PGLYRP1, HMGB1 or HSP70, multimerizes and forms a complex with transmembrane adapter TYROBP/DAP12. In turn, initiates a SYK-mediated cascade of tyrosine phosphorylation, activating multiple downstream mediators such as BTK, MAPK1, MAPK3 or phospholipase C-gamma. This cascade promotes the neutrophil- and macrophage-mediated release of pro-inflammatory cytokines and/or chemokines, as well as their migration and thereby amplifies inflammatory responses that are triggered by bacterial and fungal infections. By also promoting the amplification of inflammatory signals that are initially triggered by Toll-like receptor (TLR) and NOD-like receptor engagement, plays a major role in the pathophysiology of acute and chronic inflammatory diseases of different etiologies including septic shock and atherosclerosis. In Pongo abelii (Sumatran orangutan), this protein is Triggering receptor expressed on myeloid cells 1 (TREM1).